The following is a 411-amino-acid chain: Arginine deiminase (411 aa).

C401 functions as the Amidino-cysteine intermediate in the catalytic mechanism.

The protein belongs to the arginine deiminase family.

Its subcellular location is the cytoplasm. The enzyme catalyses L-arginine + H2O = L-citrulline + NH4(+). It functions in the pathway amino-acid degradation; L-arginine degradation via ADI pathway; carbamoyl phosphate from L-arginine: step 1/2. This Staphylococcus aureus (strain MRSA252) protein is Arginine deiminase.